The sequence spans 93 residues: YcgL domain-containing protein Swoo_2115 (93 aa).

Positions 1–85 (MICAVYKSRR…PVVNLLEEHK (85 aa)) constitute a YcgL domain.

The polypeptide is YcgL domain-containing protein Swoo_2115 (Shewanella woodyi (strain ATCC 51908 / MS32)).